A 719-amino-acid polypeptide reads, in one-letter code: 2'-5'-oligoadenylate synthase 2 (719 aa).

G2 carries N-myristoyl glycine lipidation. 2 OAS domain regions span residues 11 to 335 and 343 to 683; these read VPAQ…SWNV and TPGH…WKVP. N6-acetyllysine is present on K378. Position 396 (S396) interacts with ATP. The Mg(2+) site is built by D408, D410, and D481. 2 residues coordinate ATP: R544 and K547.

This sequence belongs to the 2-5A synthase family. In terms of assembly, homodimer. The cofactor is Mg(2+). Myristoylation is not essential for its activity. In terms of processing, glycosylated. Glycosylation is essential for its activity.

It is found in the cytoplasm. Its subcellular location is the perinuclear region. The enzyme catalyses 3 ATP = 5'-triphosphoadenylyl-(2'-&gt;5')-adenylyl-(2'-&gt;5')-adenosine + 2 diphosphate. With respect to regulation, produced as a latent enzyme which is activated by double stranded RNA (dsRNA) generated during the course of viral infection. The dsRNA activator must be at least 15 nucleotides long, and no modification of the 2'-hydroxyl group is tolerated. ssRNA or dsDNA do not act as activators. Strongly inhibited by copper, iron and zinc ions. Partially inhibited by cobalt and nickel ions. In terms of biological role, interferon-induced, dsRNA-activated antiviral enzyme which plays a critical role in cellular innate antiviral response. Activated by detection of double stranded RNA (dsRNA): polymerizes higher oligomers of 2'-5'-oligoadenylates (2-5A) from ATP which then bind to the inactive monomeric form of ribonuclease L (RNASEL) leading to its dimerization and subsequent activation. Activation of RNASEL leads to degradation of cellular as well as viral RNA, resulting in the inhibition of protein synthesis, thus terminating viral replication. Can mediate the antiviral effect via the classical RNASEL-dependent pathway or an alternative antiviral pathway independent of RNASEL. In addition, it may also play a role in other cellular processes such as apoptosis, cell growth, differentiation and gene regulation. May act as a negative regulator of lactation, stopping lactation in virally infected mammary gland lobules, thereby preventing transmission of viruses to neonates. Non-infected lobules would not be affected, allowing efficient pup feeding during infection. The protein is 2'-5'-oligoadenylate synthase 2 of Homo sapiens (Human).